The sequence spans 408 residues: ATP phosphoribosyltransferase regulatory subunit (408 aa).

It belongs to the class-II aminoacyl-tRNA synthetase family. HisZ subfamily. In terms of assembly, heteromultimer composed of HisG and HisZ subunits.

The protein resides in the cytoplasm. It functions in the pathway amino-acid biosynthesis; L-histidine biosynthesis; L-histidine from 5-phospho-alpha-D-ribose 1-diphosphate: step 1/9. Its function is as follows. Required for the first step of histidine biosynthesis. May allow the feedback regulation of ATP phosphoribosyltransferase activity by histidine. The polypeptide is ATP phosphoribosyltransferase regulatory subunit (Thermosynechococcus vestitus (strain NIES-2133 / IAM M-273 / BP-1)).